Consider the following 101-residue polypeptide: Small ribosomal subunit protein uS14 (101 aa).

The protein belongs to the universal ribosomal protein uS14 family. As to quaternary structure, part of the 30S ribosomal subunit. Contacts proteins S3 and S10.

Binds 16S rRNA, required for the assembly of 30S particles and may also be responsible for determining the conformation of the 16S rRNA at the A site. This is Small ribosomal subunit protein uS14 from Roseobacter denitrificans (strain ATCC 33942 / OCh 114) (Erythrobacter sp. (strain OCh 114)).